Here is a 437-residue protein sequence, read N- to C-terminus: tRNA-queuosine alpha-mannosyltransferase (437 aa).

Belongs to the glycosyltransferase group 1 family. Glycosyltransferase 4 subfamily.

The protein localises to the cytoplasm. The protein resides in the nucleus. It catalyses the reaction queuosine(34) in tRNA(Asp) + GDP-alpha-D-mannose = O-4''-alpha-D-mannosylqueuosine(34) in tRNA(Asp) + GDP + H(+). In terms of biological role, glycosyltransferase that specifically catalyzes mannosylation of cytoplasmic tRNA(Asp) modified with queuosine at position 34 (queuosine(34)). Mannosylates the cyclopentene moiety of queuosine(34) in tRNA(Asp) to form mannosyl-queuosine(34). Mannosylation of queuosine(34) in tRNA(Asp) is required to slow-down elongation at cognate codons, GAC and GAU, thereby regulating protein translation. In Xenopus laevis (African clawed frog), this protein is tRNA-queuosine alpha-mannosyltransferase (gtdc1).